We begin with the raw amino-acid sequence, 386 residues long: Ribosomal RNA small subunit methyltransferase H (386 aa).

S-adenosyl-L-methionine contacts are provided by residues 97 to 99 (GGH), Asp116, Tyr143, Asp167, and Gln174.

The protein belongs to the methyltransferase superfamily. RsmH family.

It localises to the cytoplasm. The enzyme catalyses cytidine(1402) in 16S rRNA + S-adenosyl-L-methionine = N(4)-methylcytidine(1402) in 16S rRNA + S-adenosyl-L-homocysteine + H(+). Functionally, specifically methylates the N4 position of cytidine in position 1402 (C1402) of 16S rRNA. The chain is Ribosomal RNA small subunit methyltransferase H from Mycolicibacterium paratuberculosis (strain ATCC BAA-968 / K-10) (Mycobacterium paratuberculosis).